Consider the following 125-residue polypeptide: Small ribosomal subunit protein bS6 (125 aa).

Residues 100 to 125 (SPMVKAREERKPLTEVENNDFEDAEE) form a disordered region. Positions 104 to 113 (KAREERKPLT) are enriched in basic and acidic residues. Positions 116–125 (ENNDFEDAEE) are enriched in acidic residues.

This sequence belongs to the bacterial ribosomal protein bS6 family.

Its function is as follows. Binds together with bS18 to 16S ribosomal RNA. This Histophilus somni (strain 129Pt) (Haemophilus somnus) protein is Small ribosomal subunit protein bS6.